The chain runs to 506 residues: ATP synthase subunit alpha (506 aa).

An ATP-binding site is contributed by 171–178; that stretch reads GDRQTGKT.

This sequence belongs to the ATPase alpha/beta chains family. In terms of assembly, F-type ATPases have 2 components, CF(1) - the catalytic core - and CF(0) - the membrane proton channel. CF(1) has five subunits: alpha(3), beta(3), gamma(1), delta(1), epsilon(1). CF(0) has four main subunits: a(1), b(1), b'(1) and c(9-12).

The protein localises to the cellular thylakoid membrane. The catalysed reaction is ATP + H2O + 4 H(+)(in) = ADP + phosphate + 5 H(+)(out). Produces ATP from ADP in the presence of a proton gradient across the membrane. The alpha chain is a regulatory subunit. The chain is ATP synthase subunit alpha from Trichormus variabilis (strain ATCC 29413 / PCC 7937) (Anabaena variabilis).